The chain runs to 419 residues: Metacaspase-1A (419 aa).

A disordered region spans residues 1–89 (MHHQQSSYGG…PPDQPVSFGQ (89 aa)). The span at 41 to 51 (NGYNSPQQNYG) shows a compositional bias: polar residues. Low complexity predominate over residues 59 to 71 (YQQQSAYQNSYNQ). Residues histidine 190 and cysteine 246 contribute to the active site.

Belongs to the peptidase C14B family.

In terms of biological role, involved in cell death (apoptosis). This Aspergillus oryzae (strain ATCC 42149 / RIB 40) (Yellow koji mold) protein is Metacaspase-1A (casA).